The chain runs to 399 residues: Acetate kinase (399 aa).

Asparagine 8 serves as a coordination point for Mg(2+). Residue lysine 15 participates in ATP binding. Arginine 89 serves as a coordination point for substrate. The active-site Proton donor/acceptor is aspartate 146. ATP-binding positions include histidine 206–glycine 210, aspartate 283–arginine 285, and glycine 331–asparagine 335. Glutamate 383 is a binding site for Mg(2+).

This sequence belongs to the acetokinase family. Homodimer. The cofactor is Mg(2+). Mn(2+) serves as cofactor.

The protein localises to the cytoplasm. The enzyme catalyses acetate + ATP = acetyl phosphate + ADP. Its pathway is metabolic intermediate biosynthesis; acetyl-CoA biosynthesis; acetyl-CoA from acetate: step 1/2. Its function is as follows. Catalyzes the formation of acetyl phosphate from acetate and ATP. Can also catalyze the reverse reaction. This Streptococcus equi subsp. zooepidemicus (strain H70) protein is Acetate kinase.